A 578-amino-acid chain; its full sequence is Solute carrier family 15 member 3 (578 aa).

A compositionally biased stretch (basic and acidic residues) spans 1–15 (MSAPRAEEQPSRSGE). The segment at 1–27 (MSAPRAEEQPSRSGERQPLVARGPRGP) is disordered. Helical transmembrane passes span 33 to 53 (TAAA…FGVT), 77 to 97 (LLFL…ADVY), 102 to 122 (LTIS…LTTI), 155 to 175 (PYCA…ASSV), and 201 to 221 (WFYW…AFIE). N223 is a glycosylation site (N-linked (GlcNAc...) asparagine). Residues 232-252 (IIVGLVGLAFFIFLFATPVFI) form a helical membrane-spanning segment. The segment at 280-301 (SRDSESAHLLPDQRSNQPGPSP) is disordered. The helical transmembrane segment at 308–328 (FQVLVKILPVMVTLVPYWMVY) threads the bilayer. An N-linked (GlcNAc...) asparagine glycan is attached at N353. The next 2 membrane-spanning stretches (helical) occupy residues 367-387 (IPEA…IPVK) and 405-425 (LQKM…AGVL). A glycan (N-linked (GlcNAc...) asparagine) is linked at N436. 3 consecutive transmembrane segments (helical) span residues 462-481 (YLLI…EFAY), 494-514 (GIFF…VALL), and 538-558 (YFFL…WIAG).

This sequence belongs to the major facilitator superfamily. Proton-dependent oligopeptide transporter (POT/PTR) (TC 2.A.17) family. In terms of tissue distribution, expressed highly in bone marrow derived macrophages, and weakly in spleen and lung. Expressed in plasmacytoid dendritic cells (pDCs) in response to toll-like receptors (TLR) stimulation.

Its subcellular location is the lysosome membrane. The protein resides in the endosome membrane. The catalysed reaction is N-acetyl-D-muramoyl-L-alanyl-D-isoglutamine(out) + n H(+)(out) = N-acetyl-D-muramoyl-L-alanyl-D-isoglutamine(in) + n H(+)(in). The enzyme catalyses glycylglycylglycine(out) + n H(+)(out) = glycylglycylglycine(in) + n H(+)(in). It catalyses the reaction carnosine(out) + n H(+)(out) = carnosine(in) + n H(+)(in). It carries out the reaction L-histidine(out) + n H(+)(out) = L-histidine(in) + n H(+)(in). Proton-coupled amino-acid transporter that transports free histidine and certain di- and tripeptides, and is involved in innate immune response. Also able to transport carnosine. Involved in the detection of microbial pathogens by toll-like receptors (TLRs) and NOD-like receptors (NLRs), probably by mediating transport of bacterial peptidoglycans across the endolysosomal membrane: catalyzes the transport of certain bacterial peptidoglycans, such as muramyl dipeptide (MDP), the NOD2 ligand. The protein is Solute carrier family 15 member 3 of Mus musculus (Mouse).